Reading from the N-terminus, the 710-residue chain is Ephexin-1 (710 aa).

Residues 1-20 show a composition bias toward basic and acidic residues; the sequence is METKNSEDWGKPQRKSESSS. The tract at residues 1–146 is disordered; it reads METKNSEDWG…TPEECPALTD (146 aa). The tract at residues 1 to 272 is regulatory region; modulates activity toward RHOA, RAC1 and CDC42; the sequence is METKNSEDWG…VLDILQPEEI (272 aa). The segment covering 123–137 has biased composition (polar residues); that stretch reads QEASESSSTPGNGTT. Tyr-177 bears the Phosphotyrosine mark. Residues 192-234 form a disordered region; the sequence is RRQQDAEIQGNSDGSQVGEDAGEEEEEEEEGEEEELASPPERR. The span at 211–227 shows a compositional bias: acidic residues; sequence DAGEEEEEEEEGEEEEL. The DH domain occupies 273-457; the sequence is RLQEAMFELV…EMVVKACNEG (185 aa). Residues 489–601 form the PH domain; the sequence is WLLKQGELQQ…WMTSLAPNRR (113 aa). The region spanning 612–673 is the SH3 domain; sequence LDCPQVQCVH…PSSMTEEILN (62 aa). Basic and acidic residues predominate over residues 688–699; that stretch reads HKMEDPQRSQNK. The tract at residues 688–710 is disordered; that stretch reads HKMEDPQRSQNKDRRKLGSRNRQ. The span at 700–710 shows a compositional bias: basic residues; sequence DRRKLGSRNRQ.

Interacts with CDK5R1 and EPHA4; activated by EPHA4 through the CDK5 kinase. Src-dependent phosphorylation at Tyr-177 upon EPHA4 activation increases the guanine exchange factor activity toward RHOA. Phosphorylation by CDK5 upon EPHA4 activation by EFNA1 may regulate dendritic spine morphogenesis. In terms of tissue distribution, highly expressed in brain and to a lower extent in eye.

Its subcellular location is the cytoplasm. The protein localises to the membrane. The protein resides in the cell projection. It is found in the growth cone. Its function is as follows. Acts as a guanine nucleotide exchange factor (GEF) which differentially activates the GTPases RHOA, RAC1 and CDC42. Plays a role in axon guidance regulating ephrin-induced growth cone collapse and dendritic spine morphogenesis. Upon activation by ephrin through EPHA4, the GEF activity switches toward RHOA resulting in its activation. Activated RHOA promotes cone retraction at the expense of RAC1- and CDC42-stimulated growth cone extension. This chain is Ephexin-1 (Ngef), found in Mus musculus (Mouse).